Here is a 377-residue protein sequence, read N- to C-terminus: 3-dehydroquinate synthase (377 aa).

NAD(+) is bound by residues 115–119 (GVIGD), 139–140 (TS), K152, and K161. Residues E194, H256, and H275 each contribute to the Zn(2+) site.

This sequence belongs to the sugar phosphate cyclases superfamily. Dehydroquinate synthase family. Co(2+) is required as a cofactor. Requires Zn(2+) as cofactor. It depends on NAD(+) as a cofactor.

It localises to the cytoplasm. It carries out the reaction 7-phospho-2-dehydro-3-deoxy-D-arabino-heptonate = 3-dehydroquinate + phosphate. It participates in metabolic intermediate biosynthesis; chorismate biosynthesis; chorismate from D-erythrose 4-phosphate and phosphoenolpyruvate: step 2/7. In terms of biological role, catalyzes the conversion of 3-deoxy-D-arabino-heptulosonate 7-phosphate (DAHP) to dehydroquinate (DHQ). In Rhizobium rhizogenes (strain K84 / ATCC BAA-868) (Agrobacterium radiobacter), this protein is 3-dehydroquinate synthase.